The following is a 214-amino-acid chain: Cytochrome c biogenesis ATP-binding export protein CcmA (214 aa).

Residues 16–212 (LRVSGLSLSR…PDAKRIDLGA (197 aa)) enclose the ABC transporter domain. 48–55 (GPNGTGKT) serves as a coordination point for ATP.

The protein belongs to the ABC transporter superfamily. CcmA exporter (TC 3.A.1.107) family. The complex is composed of two ATP-binding proteins (CcmA) and two transmembrane proteins (CcmB).

Its subcellular location is the cell inner membrane. The enzyme catalyses heme b(in) + ATP + H2O = heme b(out) + ADP + phosphate + H(+). Part of the ABC transporter complex CcmAB involved in the biogenesis of c-type cytochromes; once thought to export heme, this seems not to be the case, but its exact role is uncertain. Responsible for energy coupling to the transport system. The protein is Cytochrome c biogenesis ATP-binding export protein CcmA of Maricaulis maris (strain MCS10) (Caulobacter maris).